The chain runs to 556 residues: MKTDIEIAQSIELKPIVDVVEKLGISYDDLELYGKYKAKLSFDKIRAVESNPVGKLILVTAINPTPAGEGKSTLTIGLADALNKIGKKTMIAIREPSLGPVMGIKGGAAGGGYAQVLPMEDINLHFTGDMHAITTANNALSALIDNHLHQGNELEIDQRRILWKRVVDLNDRALRHVTVGLGGPLNGIPREDGFDITVASEIMAILCLATDIEDLKRRLANIVIGYRYDRTPVSVGDLQVEGALALILKDAIKPNLVQTIYGTPAFVHGGPFANIAHGCNSVLATTTALHLADYTVTEAGFGADLGAEKFLDIKTPNLPTSPDAVVIVATLRALKMNGGVAKDALTEENVEAVRAGFANLKRHVENIRKFGIPAVVAINEFVSDTEAEIAVLKELCASIDVPVELASVWADGAEGGVALAETVVKTIAENPANYKRLYDNDLSVQEKIEKIVNEIYRGSKVNFEKKSQTQIAQIVQNGWDKLPICMAKTQYSFSDNPNALGAPENFEITIRELVPKLGAGFIVALTGDVMTMPGLPKRPAALNMDVESDGTVLGLF.

Residue 65 to 72 coordinates ATP; that stretch reads TPAGEGKS.

This sequence belongs to the formate--tetrahydrofolate ligase family.

It catalyses the reaction (6S)-5,6,7,8-tetrahydrofolate + formate + ATP = (6R)-10-formyltetrahydrofolate + ADP + phosphate. It functions in the pathway one-carbon metabolism; tetrahydrofolate interconversion. The sequence is that of Formate--tetrahydrofolate ligase from Streptococcus pneumoniae (strain Hungary19A-6).